Consider the following 315-residue polypeptide: Lipoyl synthase (315 aa).

7 residues coordinate [4Fe-4S] cluster: C63, C68, C74, C89, C93, C96, and S303. A Radical SAM core domain is found at 75 to 292 (FSHGTATFMI…EKKAYDMGFR (218 aa)).

Belongs to the radical SAM superfamily. Lipoyl synthase family. It depends on [4Fe-4S] cluster as a cofactor.

Its subcellular location is the cytoplasm. The catalysed reaction is [[Fe-S] cluster scaffold protein carrying a second [4Fe-4S](2+) cluster] + N(6)-octanoyl-L-lysyl-[protein] + 2 oxidized [2Fe-2S]-[ferredoxin] + 2 S-adenosyl-L-methionine + 4 H(+) = [[Fe-S] cluster scaffold protein] + N(6)-[(R)-dihydrolipoyl]-L-lysyl-[protein] + 4 Fe(3+) + 2 hydrogen sulfide + 2 5'-deoxyadenosine + 2 L-methionine + 2 reduced [2Fe-2S]-[ferredoxin]. It participates in protein modification; protein lipoylation via endogenous pathway; protein N(6)-(lipoyl)lysine from octanoyl-[acyl-carrier-protein]: step 2/2. Catalyzes the radical-mediated insertion of two sulfur atoms into the C-6 and C-8 positions of the octanoyl moiety bound to the lipoyl domains of lipoate-dependent enzymes, thereby converting the octanoylated domains into lipoylated derivatives. The sequence is that of Lipoyl synthase from Laribacter hongkongensis (strain HLHK9).